The sequence spans 131 residues: Profilin (131 aa).

The protein belongs to the profilin family. In terms of assembly, occurs in many kinds of cells as a complex with monomeric actin in a 1:1 ratio.

It is found in the cytoplasm. It localises to the cytoskeleton. Functionally, binds to actin and affects the structure of the cytoskeleton. At high concentrations, profilin prevents the polymerization of actin, whereas it enhances it at low concentrations. By binding to PIP2, it inhibits the formation of IP3 and DG. The chain is Profilin from Arachis hypogaea (Peanut).